Reading from the N-terminus, the 529-residue chain is Bifunctional purine biosynthesis protein PurH (529 aa).

One can recognise an MGS-like domain in the interval glutamine 2–valine 148.

The protein belongs to the PurH family.

It catalyses the reaction (6R)-10-formyltetrahydrofolate + 5-amino-1-(5-phospho-beta-D-ribosyl)imidazole-4-carboxamide = 5-formamido-1-(5-phospho-D-ribosyl)imidazole-4-carboxamide + (6S)-5,6,7,8-tetrahydrofolate. The enzyme catalyses IMP + H2O = 5-formamido-1-(5-phospho-D-ribosyl)imidazole-4-carboxamide. Its pathway is purine metabolism; IMP biosynthesis via de novo pathway; 5-formamido-1-(5-phospho-D-ribosyl)imidazole-4-carboxamide from 5-amino-1-(5-phospho-D-ribosyl)imidazole-4-carboxamide (10-formyl THF route): step 1/1. It participates in purine metabolism; IMP biosynthesis via de novo pathway; IMP from 5-formamido-1-(5-phospho-D-ribosyl)imidazole-4-carboxamide: step 1/1. This chain is Bifunctional purine biosynthesis protein PurH, found in Proteus mirabilis (strain HI4320).